The sequence spans 164 residues: Transcription elongation factor GreA (164 aa).

Belongs to the GreA/GreB family.

In terms of biological role, necessary for efficient RNA polymerase transcription elongation past template-encoded arresting sites. The arresting sites in DNA have the property of trapping a certain fraction of elongating RNA polymerases that pass through, resulting in locked ternary complexes. Cleavage of the nascent transcript by cleavage factors such as GreA or GreB allows the resumption of elongation from the new 3'terminus. GreA releases sequences of 2 to 3 nucleotides. This chain is Transcription elongation factor GreA, found in Helicobacter pylori (strain P12).